We begin with the raw amino-acid sequence, 471 residues long: Putative multidrug resistance protein MdtD (471 aa).

The Periplasmic segment spans residues 1 to 11 (MTDLPDSTRWQ). Residues 12–32 (LWIVAFGFFMQSLDTTIVNTA) traverse the membrane as a helical segment. The Cytoplasmic portion of the chain corresponds to 33–48 (LPSMAQSLGESPLHMH). The helical transmembrane segment at 49-69 (MVIVSYVLTVAVMLPASGWLA) threads the bilayer. Residues 70 to 76 (DKVGVRN) lie on the Periplasmic side of the membrane. The chain crosses the membrane as a helical span at residues 77–97 (IFFTAIVLFTLGSLFCALSGT). Residues 98–101 (LNEL) lie on the Cytoplasmic side of the membrane. The chain crosses the membrane as a helical span at residues 102 to 124 (LLARALQGVGGAMMVPVGRLTVM). At 125–137 (KIVPREQYMAAMT) the chain is on the periplasmic side. A helical transmembrane segment spans residues 138–158 (FVTLPGQIGPLLGPALGGLLV). The Cytoplasmic segment spans residues 159–164 (EYASWH). A helical membrane pass occupies residues 165-185 (WIFLINIPVGIIGAIATLMLM). Residues 186–196 (PNYTMQTRRFD) are Periplasmic-facing. The helical transmembrane segment at 197-217 (LSGFLLLAVGMAVLTLALDGS) threads the bilayer. Residues 218-224 (KGTGFSP) are Cytoplasmic-facing. Residues 225 to 245 (LAIAGLVAVGVVALVLYLLHA) form a helical membrane-spanning segment. Residues 246–262 (QNNNRALFSLKLFRTRT) lie on the Periplasmic side of the membrane. Residues 263–283 (FSLGLAGSFAGRIGSGMLPFM) traverse the membrane as a helical segment. Topologically, residues 284 to 285 (TP) are cytoplasmic. A helical membrane pass occupies residues 286 to 306 (VFLQIGLGFSPFHAGLMMIPM). Over 307–341 (VLGSMGMKRIVVQVVNRFGYRWVLVATTLGLSLVT) the chain is Periplasmic. Residues 342-362 (LLFMTTALLGWYYVLPFVLFL) traverse the membrane as a helical segment. The Cytoplasmic portion of the chain corresponds to 363–395 (QGMVNSTRFSSMNTLTLKDLPDNLASSGNSLLS). The chain crosses the membrane as a helical span at residues 396–416 (MIMQLSMSIGVTIAGLLLGLF). Over 417 to 430 (GSQHVSVDSGTTQT) the chain is Periplasmic. The helical transmembrane segment at 431-451 (VFMYTWLSMAFIIALPAFVFA) threads the bilayer. Topologically, residues 452–471 (RVPSDTHQNVAISRRKRSAQ) are cytoplasmic.

This sequence belongs to the major facilitator superfamily. TCR/Tet family.

The protein resides in the cell inner membrane. The sequence is that of Putative multidrug resistance protein MdtD from Escherichia coli O81 (strain ED1a).